Consider the following 168-residue polypeptide: MSSTKFLKPLCRIRAFHTSIARSFTIPFLPKIPQKPGGVSGTANDSSYMPPESRAQGSYHWIVERGLSLAVLPLIAVPLVTTGPISTFTDTFLSLVLLGHCHIGFQSCIIDYISERVYGKVHHYAMYLLSLGSFLSFVGIYKLESQEAGLIASLKSLWDNKPVEKKRQ.

The N-terminal 23 residues, 1 to 23, are a transit peptide targeting the mitochondrion; sequence MSSTKFLKPLCRIRAFHTSIARS. Residues 24–65 are Mitochondrial matrix-facing; sequence FTIPFLPKIPQKPGGVSGTANDSSYMPPESRAQGSYHWIVER. A helical membrane pass occupies residues 66–86; it reads GLSLAVLPLIAVPLVTTGPIS. Over 87-92 the chain is Mitochondrial intermembrane; it reads TFTDTF. Residues 93–113 traverse the membrane as a helical segment; that stretch reads LSLVLLGHCHIGFQSCIIDYI. C101 provides a ligand contact to heme. Y112 is an a ubiquinone binding site. Residues 114–120 lie on the Mitochondrial matrix side of the membrane; that stretch reads SERVYGK. A helical transmembrane segment spans residues 121-141; that stretch reads VHHYAMYLLSLGSFLSFVGIY. At 142 to 168 the chain is on the mitochondrial intermembrane side; sequence KLESQEAGLIASLKSLWDNKPVEKKRQ.

Belongs to the CybS family. In terms of assembly, interacts with SDH3.

The protein resides in the mitochondrion inner membrane. Its function is as follows. Homolog of SDH4, but seems not to be a stoichiometric subunit of either the succinate dehydrogenase (SDH) complex or the mitochondrial inner membrane translocase TIM22 complex. This Saccharomyces cerevisiae (strain ATCC 204508 / S288c) (Baker's yeast) protein is Mitochondrial inner membrane protein SHH4.